Consider the following 334-residue polypeptide: MFRLLLICITFLALYFGFTFIKHFDSKVVISLYDYNIETTLFLSVILGLLLLVSCFIIIRFLIIIIDLPATIHIMFSKRKINHDRHAVILAFAEYIIGNKMKAASIARKNLSSEDLKDFQEFHNFILAVTAEDIDSKISYFQKLITSKTFVFYASKNLAKLYYDKSLYDKAENYAIKAYNLNELDSDNLITLMHCYAKLSLWSKFIFITNKLAKFHKHEFVPKITQYYLLIAKQEVENNNTANAIDYLEKAIDLNFYNDELLEFYFNLNDKLSVNQKTKILKEAFRIAPSLRLVQLFKKITSLSDKQIYEELTQVLDTQKDKIFILAIEAYLEL.

2 helical membrane passes run 1 to 21 (MFRLLLICITFLALYFGFTFI) and 46 to 66 (ILGLLLLVSCFIIIRFLIIII).

It is found in the cell membrane. This is an uncharacterized protein from Rickettsia prowazekii (strain Madrid E).